The chain runs to 60 residues: Large ribosomal subunit protein bL32 (60 aa).

2 disordered regions span residues 1–28 (MAVQ…PGIA) and 41–60 (HISP…KSEA). The span at 9-19 (SPSKRGMHRSH) shows a compositional bias: basic residues.

Belongs to the bacterial ribosomal protein bL32 family.

This chain is Large ribosomal subunit protein bL32, found in Verminephrobacter eiseniae (strain EF01-2).